The sequence spans 397 residues: Lysophospholipid transporter LplT (397 aa).

Topologically, residues 1–17 are periplasmic; that stretch reads MSESVHTNTSLWSKGMK. A helical transmembrane segment spans residues 18–38; that stretch reads AVIVAQFLSAFGDNALLFATL. Over 39-52 the chain is Cytoplasmic; it reads ALLKAQFYPEWSQP. Residues 53 to 73 form a helical membrane-spanning segment; it reads ILQMVFVGAYILFAPFVGQVA. The Periplasmic segment spans residues 74-90; the sequence is DSFAKGRVMMFANGLKL. Residues 91-111 traverse the membrane as a helical segment; sequence LGAASICFGINPFLGYTLVGV. The Cytoplasmic portion of the chain corresponds to 112-144; that stretch reads GAAAYSPAKYGILGELTTGSKLVKANGLMEAST. Residues 145–165 form a helical membrane-spanning segment; it reads IAAILLGSVAGGVLADWHVLV. A topological domain (periplasmic) is located at residue alanine 166. A helical transmembrane segment spans residues 167-187; it reads LAACALAYGGAVVANIYIPKL. Residues 188–226 lie on the Cytoplasmic side of the membrane; it reads AAARPGQSWNLISMTRSFLNACTSLWRNGETRFSLVGTS. The chain crosses the membrane as a helical span at residues 227–247; sequence LFWGAGVTLRFLLVLWVPVAL. At 248–256 the chain is on the periplasmic side; that stretch reads GITDNATPT. Residues 257 to 277 form a helical membrane-spanning segment; the sequence is YLNAMVAIGIVVGAGAAAKLV. At 278–280 the chain is on the cytoplasmic side; that stretch reads TLE. The chain crosses the membrane as a helical span at residues 281–301; sequence TVSRCMPAGILIGVVVLIFSL. Residues 302 to 304 are Periplasmic-facing; it reads QHE. A helical transmembrane segment spans residues 305-325; that stretch reads LLPAYALLMLIGVLGGFFVVP. The Cytoplasmic segment spans residues 326-343; it reads LNALLQERGKKSVGAGNA. The chain crosses the membrane as a helical span at residues 344–364; that stretch reads IAVQNLGENSAMLLMLGIYSL. Residues 365–366 lie on the Periplasmic side of the membrane; sequence AV. A helical transmembrane segment spans residues 367–387; sequence MVGIPVVPIGIGFGALFALAI. Topologically, residues 388–397 are cytoplasmic; it reads TALWIWQRRH.

This sequence belongs to the major facilitator superfamily. LplT (TC 2.A.1.42) family.

It localises to the cell inner membrane. Catalyzes the facilitated diffusion of 2-acyl-glycero-3-phosphoethanolamine (2-acyl-GPE) into the cell. The chain is Lysophospholipid transporter LplT from Escherichia coli O7:K1 (strain IAI39 / ExPEC).